Here is a 139-residue protein sequence, read N- to C-terminus: D-ribose pyranase (139 aa).

The Proton donor role is filled by histidine 20. Substrate-binding positions include aspartate 28, histidine 106, and 128–130 (YAN).

The protein belongs to the RbsD / FucU family. RbsD subfamily. Homodecamer.

It localises to the cytoplasm. It catalyses the reaction beta-D-ribopyranose = beta-D-ribofuranose. Its pathway is carbohydrate metabolism; D-ribose degradation; D-ribose 5-phosphate from beta-D-ribopyranose: step 1/2. In terms of biological role, catalyzes the interconversion of beta-pyran and beta-furan forms of D-ribose. The polypeptide is D-ribose pyranase (Actinobacillus succinogenes (strain ATCC 55618 / DSM 22257 / CCUG 43843 / 130Z)).